A 73-amino-acid polypeptide reads, in one-letter code: Protein SlyX homolog (73 aa).

The interval 54 to 73 is disordered; sequence LQQAESNAPAAPANERPPHY. Over residues 57–67 the composition is skewed to low complexity; it reads AESNAPAAPAN.

It belongs to the SlyX family.

This chain is Protein SlyX homolog, found in Rhodopseudomonas palustris (strain BisA53).